The sequence spans 344 residues: MTARGGRAPLARRAVVYGAVGLAAIAGVAMWSGAGRHGGTGASGEPPDASAARGPAAAPPQAAVPASTSLPPSLAGSSAPRLPLDAGGHLAKARAVRDFFDYCLTAQSDLSAAGLDAFVMREIAAQLDGTVAQAEALDVWHRYRAYLDALAKLRDAGAVDKSDLGALQLALDQRASIAYRWLGDWSQPFFGAEQWRQRYDLARLKIAQDPALTDAQKAERLAALEQQMPADERAAQQRVDRQRAAIDQIAQLQKSGATPDAMRAQLTQTLGPEAAARVAQMQQDDASWQRRYADYAAQRAQIESAGLSPQDRDAQIAALRQRVFTKPGEAVRAASLDRGAGSAR.

A helical transmembrane segment spans residues 14–34; it reads AVVYGAVGLAAIAGVAMWSGA. The segment at 37 to 78 is disordered; it reads HGGTGASGEPPDASAARGPAAAPPQAAVPASTSLPPSLAGSS. Low complexity predominate over residues 43-78; the sequence is SGEPPDASAARGPAAAPPQAAVPASTSLPPSLAGSS.

It belongs to the lipase chaperone family.

It is found in the cell inner membrane. Its function is as follows. May be involved in the folding of the extracellular lipase during its passage through the periplasm. In Burkholderia cepacia (Pseudomonas cepacia), this protein is Lipase chaperone (lifO).